A 117-amino-acid polypeptide reads, in one-letter code: Immunoglobulin lambda variable 7-43 (117 aa).

Residues 1-19 form the signal peptide; the sequence is MAWTPLFLFLLTCCPGSNS. The segment at 20–44 is framework-1; that stretch reads QTVVTQEPSLTVSPGGTVTLTCASS. One can recognise an Ig-like domain in the interval 20–117; it reads QTVVTQEPSL…YCLLYYGGAQ (98 aa). A disulfide bridge links Cys-41 with Cys-109. Positions 45–53 are complementarity-determining-1; that stretch reads TGAVTSGYY. The interval 54–70 is framework-2; the sequence is PNWFQQKPGQAPRALIY. A complementarity-determining-2 region spans residues 71-73; the sequence is STS. The framework-3 stretch occupies residues 74–109; that stretch reads NKHSWTPARFSGSLLGGKAALTLSGVQPEDEAEYYC. The tract at residues 110–117 is complementarity-determining-3; it reads LLYYGGAQ.

As to quaternary structure, immunoglobulins are composed of two identical heavy chains and two identical light chains; disulfide-linked.

The protein localises to the secreted. It is found in the cell membrane. In terms of biological role, v region of the variable domain of immunoglobulin light chains that participates in the antigen recognition. Immunoglobulins, also known as antibodies, are membrane-bound or secreted glycoproteins produced by B lymphocytes. In the recognition phase of humoral immunity, the membrane-bound immunoglobulins serve as receptors which, upon binding of a specific antigen, trigger the clonal expansion and differentiation of B lymphocytes into immunoglobulins-secreting plasma cells. Secreted immunoglobulins mediate the effector phase of humoral immunity, which results in the elimination of bound antigens. The antigen binding site is formed by the variable domain of one heavy chain, together with that of its associated light chain. Thus, each immunoglobulin has two antigen binding sites with remarkable affinity for a particular antigen. The variable domains are assembled by a process called V-(D)-J rearrangement and can then be subjected to somatic hypermutations which, after exposure to antigen and selection, allow affinity maturation for a particular antigen. This Homo sapiens (Human) protein is Immunoglobulin lambda variable 7-43.